Here is a 143-residue protein sequence, read N- to C-terminus: Large ribosomal subunit protein uL13 (143 aa).

It belongs to the universal ribosomal protein uL13 family. As to quaternary structure, part of the 50S ribosomal subunit.

This protein is one of the early assembly proteins of the 50S ribosomal subunit, although it is not seen to bind rRNA by itself. It is important during the early stages of 50S assembly. In Symbiobacterium thermophilum (strain DSM 24528 / JCM 14929 / IAM 14863 / T), this protein is Large ribosomal subunit protein uL13.